A 109-amino-acid chain; its full sequence is ATP-dependent Clp protease adapter protein ClpS (109 aa).

The segment at 1–21 is disordered; that stretch reads MAERKQGGQNNGAGSSVITEV.

This sequence belongs to the ClpS family. In terms of assembly, binds to the N-terminal domain of the chaperone ClpA.

Functionally, involved in the modulation of the specificity of the ClpAP-mediated ATP-dependent protein degradation. This Caulobacter sp. (strain K31) protein is ATP-dependent Clp protease adapter protein ClpS.